The primary structure comprises 827 residues: Glycerol-3-phosphate acyltransferase (827 aa).

Positions 309 to 314 match the HXXXXD motif motif; that stretch reads CHRSHI.

It belongs to the GPAT/DAPAT family.

The protein resides in the cell inner membrane. The catalysed reaction is sn-glycerol 3-phosphate + an acyl-CoA = a 1-acyl-sn-glycero-3-phosphate + CoA. It participates in phospholipid metabolism; CDP-diacylglycerol biosynthesis; CDP-diacylglycerol from sn-glycerol 3-phosphate: step 1/3. The polypeptide is Glycerol-3-phosphate acyltransferase (Ectopseudomonas mendocina (strain ymp) (Pseudomonas mendocina)).